The sequence spans 467 residues: Chromosomal replication initiator protein DnaA (467 aa).

The domain I, interacts with DnaA modulators stretch occupies residues 1 to 85 (MTTTLWPQVL…LEVGEYAIES (85 aa)). The domain II stretch occupies residues 85–130 (SFNEPENTSVPQPLRETKAEREAAEKAASSTSKKKSDSPPKKTIKH). Residues 87 to 129 (NEPENTSVPQPLRETKAEREAAEKAASSTSKKKSDSPPKKTIK) are disordered. Residues 99–109 (RETKAEREAAE) are compositionally biased toward basic and acidic residues. Residues 131–347 (NLNTNFTFDT…GALKRVGAFA (217 aa)) form a domain III, AAA+ region region. Residues G175, G177, K178, and T179 each contribute to the ATP site. A domain IV, binds dsDNA region spans residues 348 to 467 (QFTQQLVTVD…FNSLIRIITN (120 aa)).

This sequence belongs to the DnaA family. As to quaternary structure, oligomerizes as a right-handed, spiral filament on DNA at oriC.

It localises to the cytoplasm. Functionally, plays an essential role in the initiation and regulation of chromosomal replication. ATP-DnaA binds to the origin of replication (oriC) to initiate formation of the DNA replication initiation complex once per cell cycle. Binds the DnaA box (a 9 base pair repeat at the origin) and separates the double-stranded (ds)DNA. Forms a right-handed helical filament on oriC DNA; dsDNA binds to the exterior of the filament while single-stranded (ss)DNA is stabiized in the filament's interior. The ATP-DnaA-oriC complex binds and stabilizes one strand of the AT-rich DNA unwinding element (DUE), permitting loading of DNA polymerase. After initiation quickly degrades to an ADP-DnaA complex that is not apt for DNA replication. Binds acidic phospholipids. This is Chromosomal replication initiator protein DnaA from Hydrogenovibrio crunogenus (strain DSM 25203 / XCL-2) (Thiomicrospira crunogena).